The sequence spans 209 residues: Uracil phosphoribosyltransferase (209 aa).

Residues arginine 79, arginine 104, and 131 to 139 contribute to the 5-phospho-alpha-D-ribose 1-diphosphate site; that span reads DPMLATGGS. Uracil is bound by residues isoleucine 194 and 199 to 201; that span reads GDA. Aspartate 200 lines the 5-phospho-alpha-D-ribose 1-diphosphate pocket.

This sequence belongs to the UPRTase family. Requires Mg(2+) as cofactor.

It carries out the reaction UMP + diphosphate = 5-phospho-alpha-D-ribose 1-diphosphate + uracil. The protein operates within pyrimidine metabolism; UMP biosynthesis via salvage pathway; UMP from uracil: step 1/1. Allosterically activated by GTP. In terms of biological role, catalyzes the conversion of uracil and 5-phospho-alpha-D-ribose 1-diphosphate (PRPP) to UMP and diphosphate. The protein is Uracil phosphoribosyltransferase of Clostridium botulinum (strain Alaska E43 / Type E3).